The sequence spans 150 residues: Catabolic 3-dehydroquinase 1 (150 aa).

The active-site Proton acceptor is the tyrosine 24. Residues asparagine 75, histidine 81, and aspartate 88 each coordinate substrate. The active-site Proton donor is the histidine 101. Substrate-binding positions include 102 to 103 (VS) and arginine 112.

It belongs to the type-II 3-dehydroquinase family. In terms of assembly, homododecamer. Adopts a ring-like structure, composed of an arrangement of two hexameric rings stacked on top of one another.

The enzyme catalyses 3-dehydroquinate = 3-dehydroshikimate + H2O. Its pathway is aromatic compound metabolism; 3,4-dihydroxybenzoate biosynthesis; 3,4-dihydroxybenzoate from 3-dehydroquinate: step 1/2. Its function is as follows. Is involved in the catabolism of quinate. Allows the utilization of quinate as carbon source via the beta-ketoadipate pathway. This is Catabolic 3-dehydroquinase 1 from Aspergillus fumigatus (strain ATCC MYA-4609 / CBS 101355 / FGSC A1100 / Af293) (Neosartorya fumigata).